Reading from the N-terminus, the 270-residue chain is Formamidopyrimidine-DNA glycosylase (270 aa).

Residue Pro2 is the Schiff-base intermediate with DNA of the active site. Glu3 functions as the Proton donor in the catalytic mechanism. Lys58 functions as the Proton donor; for beta-elimination activity in the catalytic mechanism. Residues His91, Arg110, and Arg151 each coordinate DNA. The segment at 236 to 270 adopts an FPG-type zinc-finger fold; sequence FVYGRGGENCKVCGTGLREIKLGQRASVYCPRCQS. Catalysis depends on Arg260, which acts as the Proton donor; for delta-elimination activity.

The protein belongs to the FPG family. Monomer. It depends on Zn(2+) as a cofactor.

The catalysed reaction is Hydrolysis of DNA containing ring-opened 7-methylguanine residues, releasing 2,6-diamino-4-hydroxy-5-(N-methyl)formamidopyrimidine.. It carries out the reaction 2'-deoxyribonucleotide-(2'-deoxyribose 5'-phosphate)-2'-deoxyribonucleotide-DNA = a 3'-end 2'-deoxyribonucleotide-(2,3-dehydro-2,3-deoxyribose 5'-phosphate)-DNA + a 5'-end 5'-phospho-2'-deoxyribonucleoside-DNA + H(+). In terms of biological role, involved in base excision repair of DNA damaged by oxidation or by mutagenic agents. Acts as a DNA glycosylase that recognizes and removes damaged bases. Has a preference for oxidized purines, such as 7,8-dihydro-8-oxoguanine (8-oxoG). Has AP (apurinic/apyrimidinic) lyase activity and introduces nicks in the DNA strand. Cleaves the DNA backbone by beta-delta elimination to generate a single-strand break at the site of the removed base with both 3'- and 5'-phosphates. This Pseudomonas fluorescens (strain ATCC BAA-477 / NRRL B-23932 / Pf-5) protein is Formamidopyrimidine-DNA glycosylase.